A 293-amino-acid polypeptide reads, in one-letter code: MQISDHLHRFLFENTPVRGSIVHLDDSFQQSLQHHDFPQILRQALGELMAASALLAATLKLKGGALVLQVQGKGPLKLLVVECTSDLGIRATAKWSGELDGMSFSDMVSNGHFVITLDPRDGGQPYQGIVPVEGGSIAEILQSYMQRSEQIDTRMWLACDGKRAAGMLVQKMPDQPDAADPDAWNRIIMLADTVRDEELLDLSAVSLIKRLFNEEDVRLFKEQPIKFHCGCSRESVGNMLRMLGEEEVADILAEQHTIDINCDFCNAEYHFDEVDAEQLFTTEIVMPGNDVRH.

2 cysteine pairs are disulfide-bonded: C229/C231 and C262/C265.

The protein belongs to the HSP33 family. In terms of processing, under oxidizing conditions two disulfide bonds are formed involving the reactive cysteines. Under reducing conditions zinc is bound to the reactive cysteines and the protein is inactive.

The protein localises to the cytoplasm. Redox regulated molecular chaperone. Protects both thermally unfolding and oxidatively damaged proteins from irreversible aggregation. Plays an important role in the bacterial defense system toward oxidative stress. In Methylobacillus flagellatus (strain ATCC 51484 / DSM 6875 / VKM B-1610 / KT), this protein is 33 kDa chaperonin.